Consider the following 132-residue polypeptide: Small ribosomal subunit protein uS11 (132 aa).

The protein belongs to the universal ribosomal protein uS11 family. As to quaternary structure, part of the 30S ribosomal subunit. Interacts with proteins S7 and S18. Binds to IF-3.

In terms of biological role, located on the platform of the 30S subunit, it bridges several disparate RNA helices of the 16S rRNA. Forms part of the Shine-Dalgarno cleft in the 70S ribosome. The polypeptide is Small ribosomal subunit protein uS11 (Chlamydia trachomatis serovar A (strain ATCC VR-571B / DSM 19440 / HAR-13)).